Reading from the N-terminus, the 520-residue chain is Solute carrier family 2, facilitated glucose transporter member 14 (520 aa).

Residues 1–29 (MEFHNGGHVSGIGGFLVSLTSRMKPHTLA) are Cytoplasmic-facing. The chain crosses the membrane as a helical span at residues 30–50 (VTPALIFAITVATIGSFQFGY). Topologically, residues 51–88 (NTGVINAPETIIKEFINKTLTDKANAPPSEVLLTNLWS) are extracellular. Asn-67 carries N-linked (GlcNAc...) asparagine glycosylation. The helical transmembrane segment at 89 to 109 (LSVAIFSVGGMIGSFSVGLFV) threads the bilayer. Residues 110–117 (NRFGRRNS) are Cytoplasmic-facing. Residues 118–138 (MLIVNLLAATGGCLMGLCKIA) traverse the membrane as a helical segment. The Extracellular segment spans residues 139–148 (ESVEMLILGR). A helical membrane pass occupies residues 149–169 (LVIGLFCGLCTGFVPMYIGEI). The Cytoplasmic segment spans residues 170–177 (SPTALRGA). A helical transmembrane segment spans residues 178-198 (FGTLNQLGIVIGILVAQIFGL). Gln-183 is a binding site for D-glucose. The Extracellular portion of the chain corresponds to 199 to 207 (ELILGSEEL). The helical transmembrane segment at 208–228 (WPVLLGFTILPAILQSAALPC) threads the bilayer. Residues 229–293 (CPESPRFLLI…LFRVSSYRQP (65 aa)) are Cytoplasmic-facing. A helical membrane pass occupies residues 294–314 (IIISIVLQLSQQLSGINAVFY). D-glucose is bound by residues 304 to 305 (QQ) and Asn-310. The Extracellular portion of the chain corresponds to 315-328 (YSTGIFKDAGVQQP). Residues 329 to 349 (IYATISAGVVNTIFTLLSLFL) form a helical membrane-spanning segment. Position 339 (Asn-339) interacts with D-glucose. Topologically, residues 350–358 (VERAGRRTL) are cytoplasmic. A helical transmembrane segment spans residues 359 to 379 (HMIGLGGMAFCSTLMTVSLLL). Over 380–392 (KNHYNGMSFVCIG) the chain is Extracellular. Residues 393-413 (AILVFVACFEIGPGPIPWFIV) traverse the membrane as a helical segment. Glu-402 and Trp-410 together coordinate D-glucose. Residues 414–423 (AELFSQGPRP) are Cytoplasmic-facing. The chain crosses the membrane as a helical span at residues 424-444 (AAMAVAGCSNWTSNFLVGLLF). Over 445 to 451 (PSAAYYL) the chain is Extracellular. The chain crosses the membrane as a helical span at residues 452–472 (GAYVFIIFTGFLITFLAFTFF). Residues 473–520 (KVPETRGRTFEDITRAFEGQAHGADRSGKDGVMGMNSIEPAKETTTNV) lie on the Cytoplasmic side of the membrane. The tract at residues 493-520 (AHGADRSGKDGVMGMNSIEPAKETTTNV) is disordered.

The protein belongs to the major facilitator superfamily. Sugar transporter (TC 2.A.1.1) family. Glucose transporter subfamily. Mainly expressed in testis. Also expressed in small intestine, liver and kidney.

It is found in the cell membrane. The enzyme catalyses D-glucose(out) = D-glucose(in). The catalysed reaction is L-dehydroascorbate(out) = L-dehydroascorbate(in). Hexose transporter that can mediate the transport of glucose and dehydroascorbate across the cell membrane. This Homo sapiens (Human) protein is Solute carrier family 2, facilitated glucose transporter member 14.